The chain runs to 416 residues: Heat shock protein DDB_G0280215 (416 aa).

The sHSP domain occupies 37-150 (SMDWGWKPRM…SQHISLFGRE (114 aa)). The segment at 216–235 (ETKERERRIRDTKGETEKKK) is disordered.

The protein belongs to the small heat shock protein (HSP20) family.

This Dictyostelium discoideum (Social amoeba) protein is Heat shock protein DDB_G0280215.